A 525-amino-acid chain; its full sequence is GMP synthase [glutamine-hydrolyzing] (525 aa).

A Glutamine amidotransferase type-1 domain is found at 8 to 207 (KILILDFGSQ…ALEICGCPAN (200 aa)). The Nucleophile role is filled by C85. Residues H181 and E183 contribute to the active site. The GMPS ATP-PPase domain maps to 208 to 400 (WKPSSIIEDA…LGLPYDMLYR (193 aa)). ATP is bound at residue 235-241 (SGGVDSS).

Homodimer.

The enzyme catalyses XMP + L-glutamine + ATP + H2O = GMP + L-glutamate + AMP + diphosphate + 2 H(+). It participates in purine metabolism; GMP biosynthesis; GMP from XMP (L-Gln route): step 1/1. Its function is as follows. Catalyzes the synthesis of GMP from XMP. The sequence is that of GMP synthase [glutamine-hydrolyzing] from Shewanella pealeana (strain ATCC 700345 / ANG-SQ1).